A 230-amino-acid polypeptide reads, in one-letter code: Phosphoribosylformylglycinamidine synthase subunit PurQ (230 aa).

The region spanning arginine 2–valine 226 is the Glutamine amidotransferase type-1 domain. The active-site Nucleophile is cysteine 86. Active-site residues include histidine 195 and glutamate 197.

As to quaternary structure, part of the FGAM synthase complex composed of 1 PurL, 1 PurQ and 2 PurS subunits.

Its subcellular location is the cytoplasm. The catalysed reaction is N(2)-formyl-N(1)-(5-phospho-beta-D-ribosyl)glycinamide + L-glutamine + ATP + H2O = 2-formamido-N(1)-(5-O-phospho-beta-D-ribosyl)acetamidine + L-glutamate + ADP + phosphate + H(+). It catalyses the reaction L-glutamine + H2O = L-glutamate + NH4(+). It participates in purine metabolism; IMP biosynthesis via de novo pathway; 5-amino-1-(5-phospho-D-ribosyl)imidazole from N(2)-formyl-N(1)-(5-phospho-D-ribosyl)glycinamide: step 1/2. Its function is as follows. Part of the phosphoribosylformylglycinamidine synthase complex involved in the purines biosynthetic pathway. Catalyzes the ATP-dependent conversion of formylglycinamide ribonucleotide (FGAR) and glutamine to yield formylglycinamidine ribonucleotide (FGAM) and glutamate. The FGAM synthase complex is composed of three subunits. PurQ produces an ammonia molecule by converting glutamine to glutamate. PurL transfers the ammonia molecule to FGAR to form FGAM in an ATP-dependent manner. PurS interacts with PurQ and PurL and is thought to assist in the transfer of the ammonia molecule from PurQ to PurL. This Brevibacillus brevis (strain 47 / JCM 6285 / NBRC 100599) protein is Phosphoribosylformylglycinamidine synthase subunit PurQ.